A 502-amino-acid chain; its full sequence is Cyclin-dependent kinase 19 (502 aa).

Met1 is modified (N-acetylmethionine). Residues 21–335 (EYEGCKVGRG…SEQALQDPYF (315 aa)) enclose the Protein kinase domain. Residues 27-35 (VGRGTYGHV) and Lys52 each bind ATP. Asp151 functions as the Proton acceptor in the catalytic mechanism. The tract at residues 359–502 (LNEDDPEEKG…YHPSHQAHRY (144 aa)) is disordered. Positions 371–392 (NQQQQQNQHQQPTAPPQQAAAP) are enriched in low complexity. Positions 408-421 (TAGGAGAGVGGTGA) are enriched in gly residues. Over residues 424–435 (QHSQDSSLNQVP) the composition is skewed to polar residues. Ser449 bears the Phosphoserine mark. Polar residues predominate over residues 458–467 (YQHSSSRLNY). The segment covering 468–496 (QSSVQGSSQSQSTLGYSSSSQQSSQYHPS) has biased composition (low complexity).

It belongs to the protein kinase superfamily. CMGC Ser/Thr protein kinase family. CDC2/CDKX subfamily.

The protein localises to the cytoplasm. Its subcellular location is the perinuclear region. It localises to the nucleus. It carries out the reaction L-seryl-[protein] + ATP = O-phospho-L-seryl-[protein] + ADP + H(+). It catalyses the reaction L-threonyl-[protein] + ATP = O-phospho-L-threonyl-[protein] + ADP + H(+). In Homo sapiens (Human), this protein is Cyclin-dependent kinase 19 (CDK19).